We begin with the raw amino-acid sequence, 299 residues long: Pyrroline-5-carboxylate reductase 2 (299 aa).

It belongs to the pyrroline-5-carboxylate reductase family. In terms of assembly, homodecamer; composed of 5 homodimers.

The catalysed reaction is L-proline + NADP(+) = (S)-1-pyrroline-5-carboxylate + NADPH + 2 H(+). It catalyses the reaction L-proline + NAD(+) = (S)-1-pyrroline-5-carboxylate + NADH + 2 H(+). Its pathway is amino-acid biosynthesis; L-proline biosynthesis; L-proline from L-glutamate 5-semialdehyde: step 1/1. The sequence is that of Pyrroline-5-carboxylate reductase 2 (pycr2) from Dictyostelium discoideum (Social amoeba).